The primary structure comprises 387 residues: Palmitoyltransferase ZDHHC16A (387 aa).

2 helical membrane passes run 73–93 (WFGM…VFIA) and 106–126 (SPGW…MIVF). The region spanning 150–200 (SVCKKCIIPKPARSHHCGICKTCILKMDHHCPWLNNCVGHFNHRYFFSFCL) is the DHHC domain. Cys180 functions as the S-palmitoyl cysteine intermediate in the catalytic mechanism. A run of 3 helical transmembrane segments spans residues 198–218 (FCLF…HLFI), 236–256 (GVPV…GVAG), and 281–301 (VIYM…LTLW).

It belongs to the DHHC palmitoyltransferase family. As to expression, expressed in the central nervous system (CNS). Expressed in the developing forebrain, and especially in the telencephalon.

The protein localises to the endoplasmic reticulum membrane. The enzyme catalyses L-cysteinyl-[protein] + hexadecanoyl-CoA = S-hexadecanoyl-L-cysteinyl-[protein] + CoA. Palmitoyl acyltransferase that mediates palmitoylation of proteins and is required during embryonic heart development. Involved in the proliferation of neural stem cells by regulating the FGF/ERK pathway. Involved in the proliferation of neural stem cells by regulating the FGF/ERK pathway. This chain is Palmitoyltransferase ZDHHC16A, found in Danio rerio (Zebrafish).